The primary structure comprises 291 residues: MPELPEVETVRRGLEPVITGAKIVSVTLNRRDLRFPFPEAFSERLIGRTIMGLGRRAKYLLFHLSQNETILSHLGMSGSWRIEDDFLRERSSTVSKFVKHDHVVMDIQAKDGKVYHLTYNDVRRFGFMLLVDTRSLYEHPLLKKLGLEPMSNAFSGSYLQEVFVNKKISLKGVLLDQSIVAGLGNIYVCEALWRSRLSPQRGAFTLALKTECARELAASLAQNIRNVITEAISSGGSTLRDYIRTDGSLGYFQHSFSVYGREGKECLHCGIPIVRILQSGRSSFYCSQCQK.

P2 functions as the Schiff-base intermediate with DNA in the catalytic mechanism. E3 functions as the Proton donor in the catalytic mechanism. Catalysis depends on K58, which acts as the Proton donor; for beta-elimination activity. DNA contacts are provided by H100, R123, and K166. The segment at S257–K291 adopts an FPG-type zinc-finger fold. R281 serves as the catalytic Proton donor; for delta-elimination activity.

Belongs to the FPG family. In terms of assembly, monomer. Requires Zn(2+) as cofactor.

It carries out the reaction Hydrolysis of DNA containing ring-opened 7-methylguanine residues, releasing 2,6-diamino-4-hydroxy-5-(N-methyl)formamidopyrimidine.. It catalyses the reaction 2'-deoxyribonucleotide-(2'-deoxyribose 5'-phosphate)-2'-deoxyribonucleotide-DNA = a 3'-end 2'-deoxyribonucleotide-(2,3-dehydro-2,3-deoxyribose 5'-phosphate)-DNA + a 5'-end 5'-phospho-2'-deoxyribonucleoside-DNA + H(+). Its function is as follows. Involved in base excision repair of DNA damaged by oxidation or by mutagenic agents. Acts as a DNA glycosylase that recognizes and removes damaged bases. Has a preference for oxidized purines, such as 7,8-dihydro-8-oxoguanine (8-oxoG). Has AP (apurinic/apyrimidinic) lyase activity and introduces nicks in the DNA strand. Cleaves the DNA backbone by beta-delta elimination to generate a single-strand break at the site of the removed base with both 3'- and 5'-phosphates. The polypeptide is Formamidopyrimidine-DNA glycosylase (Bartonella henselae (strain ATCC 49882 / DSM 28221 / CCUG 30454 / Houston 1) (Rochalimaea henselae)).